The primary structure comprises 184 residues: GTP cyclohydrolase 1 (184 aa).

Residues C75, H78, and C146 each coordinate Zn(2+).

It belongs to the GTP cyclohydrolase I family. In terms of assembly, homomer.

The enzyme catalyses GTP + H2O = 7,8-dihydroneopterin 3'-triphosphate + formate + H(+). It functions in the pathway cofactor biosynthesis; 7,8-dihydroneopterin triphosphate biosynthesis; 7,8-dihydroneopterin triphosphate from GTP: step 1/1. This chain is GTP cyclohydrolase 1, found in Finegoldia magna (strain ATCC 29328 / DSM 20472 / WAL 2508) (Peptostreptococcus magnus).